The sequence spans 254 residues: Thiazole synthase (254 aa).

The active-site Schiff-base intermediate with DXP is Lys96. Residues Gly157, 183–184, and 205–206 contribute to the 1-deoxy-D-xylulose 5-phosphate site; these read AG and NT.

Belongs to the ThiG family. Homotetramer. Forms heterodimers with either ThiH or ThiS.

The protein resides in the cytoplasm. It catalyses the reaction [ThiS sulfur-carrier protein]-C-terminal-Gly-aminoethanethioate + 2-iminoacetate + 1-deoxy-D-xylulose 5-phosphate = [ThiS sulfur-carrier protein]-C-terminal Gly-Gly + 2-[(2R,5Z)-2-carboxy-4-methylthiazol-5(2H)-ylidene]ethyl phosphate + 2 H2O + H(+). Its pathway is cofactor biosynthesis; thiamine diphosphate biosynthesis. Functionally, catalyzes the rearrangement of 1-deoxy-D-xylulose 5-phosphate (DXP) to produce the thiazole phosphate moiety of thiamine. Sulfur is provided by the thiocarboxylate moiety of the carrier protein ThiS. In vitro, sulfur can be provided by H(2)S. The chain is Thiazole synthase from Clostridium perfringens (strain SM101 / Type A).